The primary structure comprises 161 residues: Lipoprotein signal peptidase (161 aa).

A run of 3 helical transmembrane segments spans residues Ile-9–Thr-29, Lys-63–Ile-83, and Phe-88–Ile-108. Active-site residues include Asp-118 and Asp-136. Residues Ile-131–Ile-151 traverse the membrane as a helical segment.

This sequence belongs to the peptidase A8 family.

The protein resides in the cell membrane. It carries out the reaction Release of signal peptides from bacterial membrane prolipoproteins. Hydrolyzes -Xaa-Yaa-Zaa-|-(S,diacylglyceryl)Cys-, in which Xaa is hydrophobic (preferably Leu), and Yaa (Ala or Ser) and Zaa (Gly or Ala) have small, neutral side chains.. The protein operates within protein modification; lipoprotein biosynthesis (signal peptide cleavage). Its function is as follows. This protein specifically catalyzes the removal of signal peptides from prolipoproteins. The protein is Lipoprotein signal peptidase of Staphylococcus epidermidis (strain ATCC 35984 / DSM 28319 / BCRC 17069 / CCUG 31568 / BM 3577 / RP62A).